Here is a 98-residue protein sequence, read N- to C-terminus: Putative zinc finger protein ORF98b (98 aa).

The C2H2-type zinc finger occupies 54–77; sequence GFCPYCHNHYRTFGILANHIMRSH.

The protein is Putative zinc finger protein ORF98b of Acidianus convivator (ATV).